Reading from the N-terminus, the 285-residue chain is Tropomyosin (285 aa).

Residues 1–273 (MDAIKKKMQA…KEKYREIGDD (273 aa)) adopt a coiled-coil conformation.

Belongs to the tropomyosin family. In terms of assembly, homodimer.

Tropomyosin, in association with the troponin complex, plays a central role in the calcium dependent regulation of muscle contraction. The sequence is that of Tropomyosin from Chironomus kiiensis (Midge).